We begin with the raw amino-acid sequence, 541 residues long: Chaperonin GroEL (541 aa).

Residues 30 to 33, K51, 87 to 91, G415, 479 to 481, and D495 contribute to the ATP site; these read TLGP, DGTTT, and NAA.

It belongs to the chaperonin (HSP60) family. Forms a cylinder of 14 subunits composed of two heptameric rings stacked back-to-back. Interacts with the co-chaperonin GroES.

Its subcellular location is the cytoplasm. It carries out the reaction ATP + H2O + a folded polypeptide = ADP + phosphate + an unfolded polypeptide.. Together with its co-chaperonin GroES, plays an essential role in assisting protein folding. The GroEL-GroES system forms a nano-cage that allows encapsulation of the non-native substrate proteins and provides a physical environment optimized to promote and accelerate protein folding. This chain is Chaperonin GroEL, found in Acinetobacter baumannii (strain SDF).